A 292-amino-acid polypeptide reads, in one-letter code: NAD kinase (292 aa).

Residue Asp74 is the Proton acceptor of the active site. Residues 74-75 (DG), 147-148 (NE), Asp177, and 188-193 (TGYSLS) contribute to the NAD(+) site.

It belongs to the NAD kinase family. A divalent metal cation serves as cofactor.

It localises to the cytoplasm. It carries out the reaction NAD(+) + ATP = ADP + NADP(+) + H(+). Its function is as follows. Involved in the regulation of the intracellular balance of NAD and NADP, and is a key enzyme in the biosynthesis of NADP. Catalyzes specifically the phosphorylation on 2'-hydroxyl of the adenosine moiety of NAD to yield NADP. The chain is NAD kinase from Cytophaga hutchinsonii (strain ATCC 33406 / DSM 1761 / CIP 103989 / NBRC 15051 / NCIMB 9469 / D465).